The primary structure comprises 226 residues: MKDLVDTTEMYLRTIYELEEEGVTPLRARIAERLEQSGPTVSQTVARMERDGLVVVASDRSLQMTPTGRTLATAVMRKHRLAERLLTDIIGLDINKVHDEACRWEHVMSDEVERRLVKVLKDVSRSPFGNPIPGLDELGVGNSDAAVPGTRVIDAATSMPRKVRIVQINEIFQVETDQFTQLLDADIRVGSEVEIVDRDGHITLSHNGKDVELIDDLAHTIRIEEL.

The region spanning 4 to 65 (LVDTTEMYLR…VASDRSLQMT (62 aa)) is the HTH dtxR-type domain.

The protein belongs to the DtxR/MntR family. Homodimer.

It is found in the cytoplasm. Functionally, iron-binding repressor of the dipheteria toxin gene expression. May serve as a global regulator of gene expression. Represses ripA under iron excess. The sequence is that of Diphtheria toxin repressor (dtxR) from Corynebacterium diphtheriae (strain ATCC 700971 / NCTC 13129 / Biotype gravis).